A 467-amino-acid chain; its full sequence is UDP-glycosyltransferase 71D2 (467 aa).

Residues Ser283, 339–341, 356–364, and 378–381 each bind UDP-alpha-D-glucose; these read SPQ, HCGWNSIVE, and YAEQ.

This sequence belongs to the UDP-glycosyltransferase family.

This is UDP-glycosyltransferase 71D2 (UGT71D2) from Arabidopsis thaliana (Mouse-ear cress).